The primary structure comprises 195 residues: Imidazoleglycerol-phosphate dehydratase (195 aa).

The protein belongs to the imidazoleglycerol-phosphate dehydratase family.

Its subcellular location is the cytoplasm. It catalyses the reaction D-erythro-1-(imidazol-4-yl)glycerol 3-phosphate = 3-(imidazol-4-yl)-2-oxopropyl phosphate + H2O. The protein operates within amino-acid biosynthesis; L-histidine biosynthesis; L-histidine from 5-phospho-alpha-D-ribose 1-diphosphate: step 6/9. The chain is Imidazoleglycerol-phosphate dehydratase from Shouchella clausii (strain KSM-K16) (Alkalihalobacillus clausii).